Here is a 183-residue protein sequence, read N- to C-terminus: Apo-citrate lyase phosphoribosyl-dephospho-CoA transferase (183 aa).

This sequence belongs to the CitX family.

The enzyme catalyses apo-[citrate lyase ACP] + 2'-(5''-triphospho-alpha-D-ribosyl)-3'-dephospho-CoA = holo-[citrate lyase ACP] + diphosphate. Functionally, transfers 2-(5''-triphosphoribosyl)-3'-dephosphocoenzyme-A on a serine residue to the apo-acyl carrier protein (gamma chain) of the citrate lyase to yield holo-acyl carrier protein. The polypeptide is Apo-citrate lyase phosphoribosyl-dephospho-CoA transferase (Escherichia coli O7:K1 (strain IAI39 / ExPEC)).